The sequence spans 63 residues: Small ribosomal subunit protein eS27 (63 aa).

Zn(2+) is bound by residues cysteine 18, cysteine 21, cysteine 37, and cysteine 40. Residues 18–40 form a C4-type zinc finger; the sequence is CLDCGNQQVVFDRAASYVQCIIC.

The protein belongs to the eukaryotic ribosomal protein eS27 family. Part of the 30S ribosomal subunit. The cofactor is Zn(2+).

The polypeptide is Small ribosomal subunit protein eS27 (Methanothermobacter thermautotrophicus (strain ATCC 29096 / DSM 1053 / JCM 10044 / NBRC 100330 / Delta H) (Methanobacterium thermoautotrophicum)).